We begin with the raw amino-acid sequence, 140 residues long: uncharacterized protein (140 aa).

The interval 62–140 (TEARAGRGGP…PQGRWGPSLG (79 aa)) is disordered. Residues 71–94 (PATARSRVSADSQGGRAGSSSPSS) show a composition bias toward low complexity.

This is an uncharacterized protein from Homo sapiens (Human).